The sequence spans 81 residues: MKTLLLTLVVVTIVCLDLGYTLKCNQLIPPFYKACAAGKNLCYKMFMVAAPKVPVKRGCIDVCPKSSLLVKYVCCNTDRCS.

The N-terminal stretch at 1-21 (MKTLLLTLVVVTIVCLDLGYT) is a signal peptide. Intrachain disulfides connect cysteine 24/cysteine 42, cysteine 35/cysteine 59, cysteine 63/cysteine 74, and cysteine 75/cysteine 80.

It belongs to the three-finger toxin family. Short-chain subfamily. Type IA cytotoxin sub-subfamily. In terms of assembly, monomer in solution; Homodimer and oligomer in the presence of negatively charged lipids forming a pore with a size ranging between 20 and 30 Angstroms. Expressed by the venom gland.

The protein resides in the secreted. Its subcellular location is the target cell membrane. Its function is as follows. Shows cytolytic activity on many different cells by forming pore in lipid membranes. In vivo, increases heart rate or kills the animal by cardiac arrest. In addition, it binds to heparin with high affinity, interacts with Kv channel-interacting protein 1 (KCNIP1) in a calcium-independent manner, and binds to integrin alpha-V/beta-3 (ITGAV/ITGB3) with moderate affinity. This is Cytotoxin 8 from Naja atra (Chinese cobra).